A 446-amino-acid chain; its full sequence is Kynurenine 3-monooxygenase (446 aa).

This sequence belongs to the aromatic-ring hydroxylase family. KMO subfamily. It depends on FAD as a cofactor.

The catalysed reaction is L-kynurenine + NADPH + O2 + H(+) = 3-hydroxy-L-kynurenine + NADP(+) + H2O. The protein operates within cofactor biosynthesis; NAD(+) biosynthesis; quinolinate from L-kynurenine: step 1/3. Its function is as follows. Catalyzes the hydroxylation of L-kynurenine (L-Kyn) to form 3-hydroxy-L-kynurenine (L-3OHKyn). Required for synthesis of quinolinic acid. The protein is Kynurenine 3-monooxygenase of Flavobacterium johnsoniae (strain ATCC 17061 / DSM 2064 / JCM 8514 / BCRC 14874 / CCUG 350202 / NBRC 14942 / NCIMB 11054 / UW101) (Cytophaga johnsonae).